Reading from the N-terminus, the 367-residue chain is Glutamate 5-kinase (367 aa).

Lys-10 is an ATP binding site. Substrate-binding residues include Asp-137 and Asn-149. ATP-binding positions include 169–170 (TD) and 211–217 (TGGMATK). The 79-residue stretch at 275-353 (AGEITVDDGA…QQISEILGYE (79 aa)) folds into the PUA domain.

Belongs to the glutamate 5-kinase family.

The protein localises to the cytoplasm. It catalyses the reaction L-glutamate + ATP = L-glutamyl 5-phosphate + ADP. Its pathway is amino-acid biosynthesis; L-proline biosynthesis; L-glutamate 5-semialdehyde from L-glutamate: step 1/2. Its function is as follows. Catalyzes the transfer of a phosphate group to glutamate to form L-glutamate 5-phosphate. This is Glutamate 5-kinase from Yersinia pestis bv. Antiqua (strain Antiqua).